A 239-amino-acid polypeptide reads, in one-letter code: Probable septum site-determining protein MinC (239 aa).

Belongs to the MinC family. Interacts with MinD and FtsZ.

Cell division inhibitor that blocks the formation of polar Z ring septums. Rapidly oscillates between the poles of the cell to destabilize FtsZ filaments that have formed before they mature into polar Z rings. Prevents FtsZ polymerization. The chain is Probable septum site-determining protein MinC from Colwellia psychrerythraea (strain 34H / ATCC BAA-681) (Vibrio psychroerythus).